The sequence spans 219 residues: Small ribosomal subunit protein uS3c (219 aa).

Residues 47–119 (VRKYVRTAEN…KFIISLAEVE (73 aa)) enclose the KH type-2 domain.

The protein belongs to the universal ribosomal protein uS3 family. Part of the 30S ribosomal subunit.

It localises to the plastid. The protein localises to the chloroplast. This chain is Small ribosomal subunit protein uS3c (rps3), found in Staurastrum punctulatum (Green alga).